A 296-amino-acid polypeptide reads, in one-letter code: Prostate androgen-regulated mucin-like protein 1 homolog (296 aa).

Residues 1–20 form the signal peptide; sequence MVCKVLIALCIFTAGLRVQG. Residues 21 to 244 are Extracellular-facing; sequence SPTVPLPVSL…EVENALSSGS (224 aa). Residues N61 and N95 are each glycosylated (N-linked (GlcNAc...) asparagine). Residues 72–220 form a disordered region; sequence LTSQLPTDHR…SPQDTEPGKV (149 aa). Residues 78 to 95 show a composition bias toward basic and acidic residues; that stretch reads TDHREEAVTSPPLKRDVN. Polar residues predominate over residues 96–110; that stretch reads STDSSPAGFPSTSSD. The segment covering 139-167 has biased composition (low complexity); the sequence is LLSSQAPTSATTSPATSLSESLSASVTSS. The segment covering 168-177 has biased composition (polar residues); sequence HNSTVANIQP. The N-linked (GlcNAc...) asparagine glycan is linked to N169. Residues 206–217 show a composition bias toward basic and acidic residues; it reads VPKEKSPQDTEP. The helical transmembrane segment at 245–265 threads the bilayer; it reads IAAITVTVIAVVLLVFGGAAY. Topologically, residues 266–296 are cytoplasmic; that stretch reads LKIRHSSYGRLLDDHDYGSWGNYNNPLYDDS. The residue at position 284 (S284) is a Phosphoserine.

This sequence belongs to the PARM family. In terms of processing, highly N-glycosylated and O-glycosylated.

The protein resides in the cell membrane. It localises to the golgi apparatus membrane. The protein localises to the endosome membrane. May regulate TLP1 expression and telomerase activity, thus enabling certain prostatic cells to resist apoptosis. In Mus musculus (Mouse), this protein is Prostate androgen-regulated mucin-like protein 1 homolog (Parm1).